Here is a 237-residue protein sequence, read N- to C-terminus: tRNA (guanine-N(7)-)-methyltransferase (237 aa).

S-adenosyl-L-methionine is bound by residues E67, E92, D119, and D141. D141 is a catalytic residue. Substrate contacts are provided by residues K145, D177, and 214-217; that span reads TRYE.

It belongs to the class I-like SAM-binding methyltransferase superfamily. TrmB family.

The catalysed reaction is guanosine(46) in tRNA + S-adenosyl-L-methionine = N(7)-methylguanosine(46) in tRNA + S-adenosyl-L-homocysteine. It functions in the pathway tRNA modification; N(7)-methylguanine-tRNA biosynthesis. Functionally, catalyzes the formation of N(7)-methylguanine at position 46 (m7G46) in tRNA. This chain is tRNA (guanine-N(7)-)-methyltransferase, found in Ruegeria pomeroyi (strain ATCC 700808 / DSM 15171 / DSS-3) (Silicibacter pomeroyi).